We begin with the raw amino-acid sequence, 81 residues long: ATP synthase subunit c (81 aa).

A run of 2 helical transmembrane segments spans residues 6-26 and 57-77; these read AAASVIAAALAVGLGAIGPGI and LAFMESLTIYGLVIALVLLFA.

The protein belongs to the ATPase C chain family. As to quaternary structure, F-type ATPases have 2 components, F(1) - the catalytic core - and F(0) - the membrane proton channel. F(1) has five subunits: alpha(3), beta(3), gamma(1), delta(1), epsilon(1). F(0) has four main subunits: a(1), b(1), b'(1) and c(10-14). The alpha and beta chains form an alternating ring which encloses part of the gamma chain. F(1) is attached to F(0) by a central stalk formed by the gamma and epsilon chains, while a peripheral stalk is formed by the delta, b and b' chains.

It is found in the cellular thylakoid membrane. F(1)F(0) ATP synthase produces ATP from ADP in the presence of a proton or sodium gradient. F-type ATPases consist of two structural domains, F(1) containing the extramembraneous catalytic core and F(0) containing the membrane proton channel, linked together by a central stalk and a peripheral stalk. During catalysis, ATP synthesis in the catalytic domain of F(1) is coupled via a rotary mechanism of the central stalk subunits to proton translocation. In terms of biological role, key component of the F(0) channel; it plays a direct role in translocation across the membrane. A homomeric c-ring of between 10-14 subunits forms the central stalk rotor element with the F(1) delta and epsilon subunits. The chain is ATP synthase subunit c from Synechocystis sp. (strain ATCC 27184 / PCC 6803 / Kazusa).